We begin with the raw amino-acid sequence, 549 residues long: Oxygen-dependent choline dehydrogenase (549 aa).

An FAD-binding site is contributed by 4–33 (DFVIIGSGSAGSAMAYRLSENGRYSVIVIE). The active-site Proton acceptor is the histidine 465.

This sequence belongs to the GMC oxidoreductase family. It depends on FAD as a cofactor.

The enzyme catalyses choline + A = betaine aldehyde + AH2. It carries out the reaction betaine aldehyde + NAD(+) + H2O = glycine betaine + NADH + 2 H(+). Its pathway is amine and polyamine biosynthesis; betaine biosynthesis via choline pathway; betaine aldehyde from choline (cytochrome c reductase route): step 1/1. Involved in the biosynthesis of the osmoprotectant glycine betaine. Catalyzes the oxidation of choline to betaine aldehyde and betaine aldehyde to glycine betaine at the same rate. In Brucella suis biovar 1 (strain 1330), this protein is Oxygen-dependent choline dehydrogenase.